Here is a 526-residue protein sequence, read N- to C-terminus: GMP synthase [glutamine-hydrolyzing] (526 aa).

The 199-residue stretch at 4-202 folds into the Glutamine amidotransferase type-1 domain; it reads KILILDFGSQ…VHDICGCDQS (199 aa). C81 (nucleophile) is an active-site residue. Residues H176 and E178 contribute to the active site. The GMPS ATP-PPase domain occupies 203 to 395; that stretch reads WNMPDYVETA…LGLPHDMVYR (193 aa). Residue 230 to 236 coordinates ATP; that stretch reads SGGVDSS.

As to quaternary structure, homodimer.

It catalyses the reaction XMP + L-glutamine + ATP + H2O = GMP + L-glutamate + AMP + diphosphate + 2 H(+). The protein operates within purine metabolism; GMP biosynthesis; GMP from XMP (L-Gln route): step 1/1. Its function is as follows. Catalyzes the synthesis of GMP from XMP. This is GMP synthase [glutamine-hydrolyzing] from Methylobacillus flagellatus (strain ATCC 51484 / DSM 6875 / VKM B-1610 / KT).